The following is a 401-amino-acid chain: Ureide permease 4 (401 aa).

Residues 1-10 (MYVVESKAGA) lie on the Extracellular side of the membrane. The chain crosses the membrane as a helical span at residues 11-31 (IGCMILSLCCLGSWPAILTLL). The Cytoplasmic portion of the chain corresponds to 32-40 (ERRGRLPQH). A helical membrane pass occupies residues 41 to 61 (TFLDFATANLLAAIVIAFSLG). At 62–81 (EIGKSTFLKPDFTTQLPQDN) the chain is on the extracellular side. The chain crosses the membrane as a helical span at residues 82 to 102 (WPSVLLAVAGGVLLSIGNLAT). Over 103–104 (QY) the chain is Cytoplasmic. The chain crosses the membrane as a helical span at residues 105-125 (AFAFVGLSVTEVITASITVVI). At 126–141 (GTTLNYFLDNKINKAE) the chain is on the extracellular side. The helical transmembrane segment at 142–162 (ILFPGVGCFLIAVFLGAAVHA) threads the bilayer. At 163–231 (SNAADVKEKL…KRAIKVFGKS (69 aa)) the chain is on the cytoplasmic side. 224–231 (AIKVFGKS) serves as a coordination point for ATP. A helical membrane pass occupies residues 232–252 (IMIGLFITLFAGISLSLFSPA). Over 253–275 (FNLATNDQWSTLPKGVPKLVVYT) the chain is Extracellular. Residues 276–296 (AFFYFSIAGFLISLILNLIFL) traverse the membrane as a helical segment. The Cytoplasmic segment spans residues 297–318 (YRPMVGLARSSLKKYIYDSKGR). The chain crosses the membrane as a helical span at residues 319 to 339 (GWAVFAGFLCGFGNGLQFMGG). Over 340-344 (QAAGY) the chain is Extracellular. A helical membrane pass occupies residues 345–365 (AAADSVQALPLVSTFWGIVLF). The Cytoplasmic segment spans residues 366-374 (GEYRKSSKR). The helical transmembrane segment at 375 to 395 (TYALLVSMLAMFVAAVAILMA) threads the bilayer. The Extracellular portion of the chain corresponds to 396–401 (SSGHRK).

Belongs to the plant ureide permease (TC 2.A.7.19) family. Expressed in developing seedlings, flower filaments and stigma, and the top and bottom parts of carpels in siliques.

The protein resides in the membrane. Proton-coupled transporter that transports a wide spectrum of oxo derivatives of heterocyclic nitrogen compounds. This chain is Ureide permease 4, found in Arabidopsis thaliana (Mouse-ear cress).